A 417-amino-acid chain; its full sequence is Tyrosine aminotransferase (417 aa).

Residue Lys-249 is modified to N6-(pyridoxal phosphate)lysine.

It belongs to the class-I pyridoxal-phosphate-dependent aminotransferase family. As to quaternary structure, homodimer. It depends on pyridoxal 5'-phosphate as a cofactor.

The enzyme catalyses L-tyrosine + 2-oxoglutarate = 3-(4-hydroxyphenyl)pyruvate + L-glutamate. The protein operates within amino-acid degradation; L-phenylalanine degradation; acetoacetate and fumarate from L-phenylalanine: step 2/6. In terms of biological role, transaminase involved in tyrosine breakdown. Converts tyrosine to p-hydroxyphenylpyruvate. Has much lower affinity and transaminase activity towards phenylalanine. This chain is Tyrosine aminotransferase (tat), found in Dictyostelium discoideum (Social amoeba).